A 534-amino-acid chain; its full sequence is MEQYEVVEQIGRGAYGSAYLVVHKGERKRYVMKKIRLSKQNDKFQRTAYQEMSLMASLSNPYIVEYKDGWVDEGTSACIVTSYCEGGDMAERIKKARGVLFSEERVCRWFTQLLLALDYLHCNRVLHRDLKCSNILLTKDNNIRLADFGLAKLLMEDLASTIVGTPNYMCPEILADIPYGYKSDIWSLGCCMFEILAHRPAFKAADMASLINKINRSSISPMPPIYSSSLKQIVKSMLRKNPEHRPTAGELLRHPYLQPYLAESCSCSPIYLPVKPTKSNLGDKQQSRKPGSGRKRIIKTNGSSEALETAAEQAVDTRDNSTYISDVSTVGTQDACISQVSVDPQARNKAYQNIDDLTLFQQIEENLMTITDRQIDEAIFLKAVRTSSTVDVVPVSGAIQKPNEAPIPKEELTIGVVQEQRKEVKAHTHQGSKPGTGDVPIVTEESSPKSAVKLAHSDSTPAEWDHLNIVQQRADALESLLELCAKLLKQERLEELAGVLRPFGEGAVSSRETAIWLTKSLMTPPKLEGSPKLT.

One can recognise a Protein kinase domain in the interval 4 to 257; that stretch reads YEVVEQIGRG…AGELLRHPYL (254 aa). ATP contacts are provided by residues 10–18 and K33; that span reads IGRGAYGSA. The active-site Proton acceptor is D129. Disordered stretches follow at residues 278–306 and 425–449; these read KSNL…SSEA and KAHT…SSPK.

The protein belongs to the protein kinase superfamily. NEK Ser/Thr protein kinase family. NIMA subfamily. In terms of assembly, interacts with DIS1. Post-translationally, ubiquitinated by the E3 ligase DIS1. Ubiquitination of NEK6 leads to its degradation via the 26S proteasome-dependent pathway. As to expression, expressed in anthers, pistils and leaves.

Its subcellular location is the cytoplasm. The catalysed reaction is L-seryl-[protein] + ATP = O-phospho-L-seryl-[protein] + ADP + H(+). It carries out the reaction L-threonyl-[protein] + ATP = O-phospho-L-threonyl-[protein] + ADP + H(+). In terms of biological role, may be involved in plant development processes. This chain is Serine/threonine-protein kinase Nek6, found in Oryza sativa subsp. japonica (Rice).